We begin with the raw amino-acid sequence, 217 residues long: Small ribosomal subunit protein uS3 (217 aa).

One can recognise a KH type-2 domain in the interval 40 to 110 (IRDLINKGFN…EVYINIHEVR (71 aa)).

It belongs to the universal ribosomal protein uS3 family. In terms of assembly, part of the 30S ribosomal subunit. Forms a tight complex with proteins S10 and S14.

In terms of biological role, binds the lower part of the 30S subunit head. Binds mRNA in the 70S ribosome, positioning it for translation. This chain is Small ribosomal subunit protein uS3, found in Rickettsia akari (strain Hartford).